We begin with the raw amino-acid sequence, 491 residues long: Keratin, type I cytoskeletal 24 (491 aa).

The tract at residues 1 to 23 is disordered; the sequence is MFCSAQKGSCSSRVSSSGAVGSR. The interval 1–117 is head; that stretch reads MFCSAQKGSC…GYDGGLLSGS (117 aa). A compositionally biased stretch (low complexity) spans 8–23; sequence GSCSSRVSSSGAVGSR. A coil 1A region spans residues 118 to 153; it reads EKQTMQGLNDRLANYLDKVRALEEANTDLETKIKDW. The IF rod domain occupies 118–432; the sequence is EKQTMQGLND…RLLNGDGGGC (315 aa). The tract at residues 154–174 is linker 1; that stretch reads YGRHGSGKDGPGRDYSQYCSV. Residues 175–266 are coil 1B; the sequence is IEDLKNQIIS…KNHEEEMKCL (92 aa). Residues 267–289 form a linker 12 region; it reads QGSSGGDVTVEMNATPGTDLTKL. Residues 290-428 form a coil 2 region; sequence LNDMRAQYEA…ETYRRLLNGD (139 aa). The tract at residues 429–491 is tail; sequence GGGCDYRNLV…VSNISEVKIK (63 aa).

This sequence belongs to the intermediate filament family. Heterotetramer of two type I and two type II keratins.

The chain is Keratin, type I cytoskeletal 24 (Krt24) from Rattus norvegicus (Rat).